The following is a 361-amino-acid chain: Alanine racemase (361 aa).

The Proton acceptor; specific for D-alanine role is filled by Lys-35. Lys-35 carries the N6-(pyridoxal phosphate)lysine modification. Arg-132 is a binding site for substrate. The Proton acceptor; specific for L-alanine role is filled by Tyr-257. Residue Met-305 participates in substrate binding.

It belongs to the alanine racemase family. It depends on pyridoxal 5'-phosphate as a cofactor.

It carries out the reaction L-alanine = D-alanine. It participates in amino-acid biosynthesis; D-alanine biosynthesis; D-alanine from L-alanine: step 1/1. Functionally, catalyzes the interconversion of L-alanine and D-alanine. May also act on other amino acids. The protein is Alanine racemase (alr) of Thioalkalivibrio sulfidiphilus (strain HL-EbGR7).